The sequence spans 119 residues: Large ribosomal subunit protein uL24 (119 aa).

Belongs to the universal ribosomal protein uL24 family. In terms of assembly, part of the 50S ribosomal subunit.

In terms of biological role, one of two assembly initiator proteins, it binds directly to the 5'-end of the 23S rRNA, where it nucleates assembly of the 50S subunit. Functionally, one of the proteins that surrounds the polypeptide exit tunnel on the outside of the subunit. This chain is Large ribosomal subunit protein uL24, found in Clavibacter sepedonicus (Clavibacter michiganensis subsp. sepedonicus).